We begin with the raw amino-acid sequence, 191 residues long: Imidazoleglycerol-phosphate dehydratase (191 aa).

This sequence belongs to the imidazoleglycerol-phosphate dehydratase family.

It is found in the cytoplasm. It carries out the reaction D-erythro-1-(imidazol-4-yl)glycerol 3-phosphate = 3-(imidazol-4-yl)-2-oxopropyl phosphate + H2O. It participates in amino-acid biosynthesis; L-histidine biosynthesis; L-histidine from 5-phospho-alpha-D-ribose 1-diphosphate: step 6/9. The polypeptide is Imidazoleglycerol-phosphate dehydratase (Methanosarcina mazei (strain ATCC BAA-159 / DSM 3647 / Goe1 / Go1 / JCM 11833 / OCM 88) (Methanosarcina frisia)).